The primary structure comprises 393 residues: tRNA(Met) cytidine acetate ligase (393 aa).

The ATP site is built by Gly81, Asn142, and Arg167.

This sequence belongs to the TmcAL family.

The protein resides in the cytoplasm. The enzyme catalyses cytidine(34) in elongator tRNA(Met) + acetate + ATP = N(4)-acetylcytidine(34) in elongator tRNA(Met) + AMP + diphosphate. In terms of biological role, catalyzes the formation of N(4)-acetylcytidine (ac(4)C) at the wobble position of elongator tRNA(Met), using acetate and ATP as substrates. First activates an acetate ion to form acetyladenylate (Ac-AMP) and then transfers the acetyl group to tRNA to form ac(4)C34. This Bacillus cereus (strain ATCC 10987 / NRS 248) protein is tRNA(Met) cytidine acetate ligase.